A 413-amino-acid polypeptide reads, in one-letter code: Patatin-like protein 3 (413 aa).

The PNPLA domain maps to 54 to 245 (LSVDGGARPE…ALGNPTAAAI (192 aa)). Positions 58–61 (GGAR) match the GGXR motif. S100 (nucleophile) is an active-site residue. Residues 384 to 413 (EHGRRKQHVPPAASGGGGGGLDCHVSKKQP) form a disordered region.

It belongs to the patatin family.

In terms of biological role, possesses non-specific lipolytic acyl hydrolase (LAH) activity. Hydrolyzes phospholipids as well as galactolipids. May play a role in disease resistance. This Oryza sativa subsp. indica (Rice) protein is Patatin-like protein 3 (PLP3).